We begin with the raw amino-acid sequence, 118 residues long: UPF0102 protein lpg2994 (118 aa).

Belongs to the UPF0102 family.

This is UPF0102 protein lpg2994 from Legionella pneumophila subsp. pneumophila (strain Philadelphia 1 / ATCC 33152 / DSM 7513).